Consider the following 38-residue polypeptide: Large ribosomal subunit protein bL36 (38 aa).

Belongs to the bacterial ribosomal protein bL36 family.

The polypeptide is Large ribosomal subunit protein bL36 (Buchnera aphidicola subsp. Baizongia pistaciae (strain Bp)).